The following is a 397-amino-acid chain: Flavohemoprotein (397 aa).

The 137-residue stretch at 4–140 (SFSPHTITLI…IANLLKDREA (137 aa)) folds into the Globin domain. His-87 provides a ligand contact to heme b. Active-site charge relay system residues include Tyr-97 and Glu-139. The reductase stretch occupies residues 151–397 (GGWIHWRRFV…FGPMDEEMAA (247 aa)). The FAD-binding FR-type domain occupies 154-258 (IHWRRFVISK…TPPVGDFFLP (105 aa)). Residues Tyr-192 and 207 to 210 (RNYS) each bind FAD. 271–276 (GVGLTP) serves as a coordination point for NADP(+). 387–390 (FFGP) is an FAD binding site.

It belongs to the globin family. Two-domain flavohemoproteins subfamily. The protein in the C-terminal section; belongs to the flavoprotein pyridine nucleotide cytochrome reductase family. The cofactor is heme b. FAD is required as a cofactor.

It catalyses the reaction 2 nitric oxide + NADPH + 2 O2 = 2 nitrate + NADP(+) + H(+). The catalysed reaction is 2 nitric oxide + NADH + 2 O2 = 2 nitrate + NAD(+) + H(+). In terms of biological role, is involved in NO detoxification in an aerobic process, termed nitric oxide dioxygenase (NOD) reaction that utilizes O(2) and NAD(P)H to convert NO to nitrate, which protects the bacterium from various noxious nitrogen compounds. Therefore, plays a central role in the inducible response to nitrosative stress. This Xylella fastidiosa (strain Temecula1 / ATCC 700964) protein is Flavohemoprotein.